The sequence spans 515 residues: 2-isopropylmalate synthase (515 aa).

The Pyruvate carboxyltransferase domain maps to 4–266; that stretch reads IKFFDTTLRD…ETRLNLQEIK (263 aa). Mn(2+)-binding residues include D13, H201, H203, and N237. The interval 391–515 is regulatory domain; the sequence is QLSSIQVQYG…RAENEKVTTP (125 aa).

The protein belongs to the alpha-IPM synthase/homocitrate synthase family. LeuA type 1 subfamily. In terms of assembly, homodimer. It depends on Mn(2+) as a cofactor.

It localises to the cytoplasm. It catalyses the reaction 3-methyl-2-oxobutanoate + acetyl-CoA + H2O = (2S)-2-isopropylmalate + CoA + H(+). It functions in the pathway amino-acid biosynthesis; L-leucine biosynthesis; L-leucine from 3-methyl-2-oxobutanoate: step 1/4. In terms of biological role, catalyzes the condensation of the acetyl group of acetyl-CoA with 3-methyl-2-oxobutanoate (2-ketoisovalerate) to form 3-carboxy-3-hydroxy-4-methylpentanoate (2-isopropylmalate). This chain is 2-isopropylmalate synthase, found in Geobacillus thermodenitrificans (strain NG80-2).